The primary structure comprises 367 residues: Epoxide hydrolase 3 (367 aa).

A helical membrane pass occupies residues 22–42 (ALVMSLVYLAALVAAFVYSCI). Aspartate 180 (nucleophile) is an active-site residue. The active-site Proton donor is tyrosine 288. Histidine 344 functions as the Proton acceptor in the catalytic mechanism.

The protein belongs to the AB hydrolase superfamily. Epoxide hydrolase family. As to expression, predominantly expressed in skin, esophagus, lung and tongue and to a lesser extent in pancreas and eye.

Its subcellular location is the microsome membrane. It carries out the reaction an epoxide + H2O = an ethanediol. It catalyses the reaction 9,10-epoxyoctadecanoate + H2O = 9,10-dihydroxyoctadecanoate. The catalysed reaction is 9,10-epoxy-(12Z)-octadecenoate + H2O = 9,10-dihydroxy-(12Z)-octadecenoate. The enzyme catalyses 8,9-epoxy-(5Z,11Z,14Z)-eicosatrienoate + H2O = 8,9-dihydroxy-(5Z,11Z,14Z)-eicosatrienoate. It carries out the reaction 11,12-epoxy-(5Z,8Z,14Z)-eicosatrienoate + H2O = 11,12-dihydroxy-(5Z,8Z,14Z)-eicosatrienoate. It catalyses the reaction 14,15-epoxy-(5Z,8Z,11Z)-eicosatrienoate + H2O = 14,15-dihydroxy-(5Z,8Z,11Z)-eicosatrienoate. Its activity is regulated as follows. Inhibited by 1-(1-acetylpiperidin-4-yl)-3-(4-(trifl uoromethoxy)phenyl)urea (TPAU), 1-cyclohexyl-3-dodecylurea (CDU), 12-(3-adamantan-1-yl-ureido)-dodecanoic acid (AUDA), 1-((3S, 5S, 7S)-adamantan-1-yl)-3-(5-(2-(2-ethoxyethoxy) ethoxy)pentyl)urea (AEPU) and to a lesser extent by 8-(3-((3S, 5S, 7S)-adamantan-1-yl)ureido) octanoic acid (AUOA). Functionally, catalyzes the hydrolysis of epoxide-containing fatty acids. Active in vitro against epoxyeicosatrienoic acids (EETs) including 8,9-EET, 9,10-EET, 11,12-EET and 14,15-EET and leukotoxin. This is Epoxide hydrolase 3 (Ephx3) from Mus musculus (Mouse).